Consider the following 195-residue polypeptide: MYRPKDHGWVEVIVGPMYSGKSEELIRRIRRAKIAKQKIQVFKPEIDNRYSKEDVVSHMGEKEQAVAIKNSREILKYFEEDTEVIAIDEVQFFDDEIVEIVNKIAESGRRVICAGLDMDFRGKPFGPIPELMAIAEFVDKIQAICVVCGNPATRTQRLINGKPAFYDDPVVLIGAMESYEARCRKCHVVPQKKEV.

ATP contacts are provided by residues 15-22 (GPMYSGKS), glutamate 23, 57-58 (SH), and 88-91 (DEVQ). The Proton acceptor role is filled by glutamate 89. Substrate is bound at residue phenylalanine 120. Positions 145 and 148 each coordinate Zn(2+). A substrate-binding site is contributed by tyrosine 179. Positions 183 and 186 each coordinate Zn(2+).

Belongs to the thymidine kinase family.

The protein localises to the cytoplasm. The catalysed reaction is thymidine + ATP = dTMP + ADP + H(+). In Clostridium acetobutylicum (strain ATCC 824 / DSM 792 / JCM 1419 / IAM 19013 / LMG 5710 / NBRC 13948 / NRRL B-527 / VKM B-1787 / 2291 / W), this protein is Thymidine kinase.